The following is a 193-amino-acid chain: Pre-histone-like nucleoprotein (193 aa).

Position 2 is an N-acetylserine; by host (Ser2). The propeptide occupies 2–24 (SIFISPSNNTGWGLRAPSKMYGG). At Lys48 the chain carries N6-acetyllysine; by host. Thr55 is modified (phosphothreonine; by host). The Nuclear localization signal signature appears at 183–193 (RVPVRTRPPRT).

It belongs to the adenoviridae histone-like nucleoprotein family. Interacts with the core-capsid bridging protein; this interaction bridges the virus core to the capsid. Interacts with host NPM1; this interaction might play a role in placing the pre-histone-like nucleoprotein on the viral DNA or regulating viral gene expression. Interacts with host HMGB1; this interaction inhibits host immune response. Cleaved near the N-terminus by the viral protease during virion maturation to form the mature protein.

The protein localises to the virion. It is found in the host nucleus. The protein resides in the host nucleolus. Plays a role in the inhibition of host immune response within the nucleus. Interacts with cellular nucleosomes and immobilizes the host immune danger signal HMGB1 on chromatin. In turn, prevents HMGB1 release out of the cell and thus decreases inflammation. Also plays a role in the wrapping and condensation of the viral DNA. May also promote viral genome import into the nucleus. The protein is Pre-histone-like nucleoprotein of Homo sapiens (Human).